Here is a 360-residue protein sequence, read N- to C-terminus: Archaemetzincin-2 (360 aa).

His-254 serves as a coordination point for Zn(2+). Glu-255 (proton acceptor) is an active-site residue. The Zn(2+) site is built by His-258, His-264, Cys-265, Cys-270, Cys-289, and Cys-292.

This sequence belongs to the peptidase M54 family. Requires Zn(2+) as cofactor.

Probable zinc metalloprotease. In Pongo abelii (Sumatran orangutan), this protein is Archaemetzincin-2 (AMZ2).